The following is a 142-amino-acid chain: Large ribosomal subunit protein uL13 (142 aa).

This sequence belongs to the universal ribosomal protein uL13 family. As to quaternary structure, part of the 50S ribosomal subunit.

This protein is one of the early assembly proteins of the 50S ribosomal subunit, although it is not seen to bind rRNA by itself. It is important during the early stages of 50S assembly. The polypeptide is Large ribosomal subunit protein uL13 (Shewanella baltica (strain OS185)).